A 346-amino-acid chain; its full sequence is Flap endonuclease 1 (346 aa).

The segment at 1–102 (MGVTELGKLI…LEIEQRKKAK (102 aa)) is N-domain. Mg(2+) contacts are provided by aspartate 31, aspartate 84, glutamate 156, glutamate 158, aspartate 177, aspartate 179, and aspartate 239. The interval 120-261 (DVAKYAKRAI…KALKLIWEFG (142 aa)) is I-domain.

This sequence belongs to the XPG/RAD2 endonuclease family. FEN1 subfamily. As to quaternary structure, interacts with PCNA. PCNA stimulates the nuclease activity without altering cleavage specificity. The cofactor is Mg(2+).

Structure-specific nuclease with 5'-flap endonuclease and 5'-3' exonuclease activities involved in DNA replication and repair. During DNA replication, cleaves the 5'-overhanging flap structure that is generated by displacement synthesis when DNA polymerase encounters the 5'-end of a downstream Okazaki fragment. Binds the unpaired 3'-DNA end and kinks the DNA to facilitate 5' cleavage specificity. Cleaves one nucleotide into the double-stranded DNA from the junction in flap DNA, leaving a nick for ligation. Also involved in the base excision repair (BER) pathway. Acts as a genome stabilization factor that prevents flaps from equilibrating into structures that lead to duplications and deletions. Also possesses 5'-3' exonuclease activity on nicked or gapped double-stranded DNA. This chain is Flap endonuclease 1, found in Pyrobaculum calidifontis (strain DSM 21063 / JCM 11548 / VA1).